Reading from the N-terminus, the 547-residue chain is ATP synthase subunit beta, mitochondrial (547 aa).

The transit peptide at 1–45 (MASRRLLSSFLRSSTRRSLRPSFSNPRPSFLTSYCSSPASILRRY) directs the protein to the mitochondrion. The segment covering 52–62 (KEPAASKPAGT) has biased composition (low complexity). The interval 52 to 74 (KEPAASKPAGTAGTGKGTITDEK) is disordered. Position 226-233 (226-233 (GGDWVGKT)) interacts with ATP.

It belongs to the ATPase alpha/beta chains family. As to quaternary structure, F-type ATPases have 2 components, CF(1) - the catalytic core - and CF(0) - the membrane proton channel. CF(1) has five subunits: alpha(3), beta(3), gamma(1), delta(1), epsilon(1). CF(0) has three main subunits: a, b and c.

The protein resides in the mitochondrion. It localises to the mitochondrion inner membrane. It carries out the reaction ATP + H2O + 4 H(+)(in) = ADP + phosphate + 5 H(+)(out). In terms of biological role, mitochondrial membrane ATP synthase (F(1)F(0) ATP synthase or Complex V) produces ATP from ADP in the presence of a proton gradient across the membrane which is generated by electron transport complexes of the respiratory chain. F-type ATPases consist of two structural domains, F(1) - containing the extramembraneous catalytic core, and F(0) - containing the membrane proton channel, linked together by a central stalk and a peripheral stalk. During catalysis, ATP synthesis in the catalytic domain of F(1) is coupled via a rotary mechanism of the central stalk subunits to proton translocation. Subunits alpha and beta form the catalytic core in F(1). Rotation of the central stalk against the surrounding alpha(3)beta(3) subunits leads to hydrolysis of ATP in three separate catalytic sites on the beta subunits. The chain is ATP synthase subunit beta, mitochondrial (ATPB) from Daucus carota (Wild carrot).